Here is a 387-residue protein sequence, read N- to C-terminus: 3-ketoacyl-CoA thiolase (387 aa).

The active-site Acyl-thioester intermediate is C91. Residues H343 and C373 each act as proton acceptor in the active site.

This sequence belongs to the thiolase-like superfamily. Thiolase family. As to quaternary structure, heterotetramer of two alpha chains (FadB) and two beta chains (FadA).

It is found in the cytoplasm. It catalyses the reaction an acyl-CoA + acetyl-CoA = a 3-oxoacyl-CoA + CoA. Its pathway is lipid metabolism; fatty acid beta-oxidation. Functionally, catalyzes the final step of fatty acid oxidation in which acetyl-CoA is released and the CoA ester of a fatty acid two carbons shorter is formed. The protein is 3-ketoacyl-CoA thiolase of Shigella boydii serotype 4 (strain Sb227).